The primary structure comprises 110 residues: Endoribonuclease SymE (110 aa).

The SpoVT-AbrB domain maps to serine 29–proline 74.

Belongs to the SymE family.

The protein resides in the cytoplasm. Involved in the degradation and recycling of damaged RNA. It is itself a target for degradation by the ATP-dependent protease Lon. This Salmonella heidelberg (strain SL476) protein is Endoribonuclease SymE.